The primary structure comprises 884 residues: Probable leucine-rich repeat receptor-like protein kinase At2g28990 (884 aa).

A signal peptide spans 1–19 (MKIHLLLAMIGTFVVIIGA). Topologically, residues 20–508 (QDQEGFISLD…TEKKNKFLLP (489 aa)) are extracellular. Asn-70, Asn-177, Asn-217, Asn-231, Asn-251, Asn-284, Asn-298, Asn-334, Asn-418, Asn-427, Asn-438, Asn-459, and Asn-464 each carry an N-linked (GlcNAc...) asparagine glycan. 3 LRR repeats span residues 404–427 (SPTI…ILQN), 428–451 (FTQL…FLAN), and 452–476 (MKTL…LLDK). Residues 509–529 (VIASAASLVIVVVVVALFFVF) form a helical membrane-spanning segment. Residues 530–884 (RKKKASPSNL…IYNEVIPQAR (355 aa)) lie on the Cytoplasmic side of the membrane. The interval 535–559 (SPSNLHAPPSMPVSNPGHNSQSESS) is disordered. Residues 546–559 (PVSNPGHNSQSESS) are compositionally biased toward polar residues. Thr-568 is subject to Phosphothreonine. Positions 577 to 850 (NNFDKALGEG…RVVNELKECL (274 aa)) constitute a Protein kinase domain. ATP contacts are provided by residues 583–591 (LGEGGFGVV) and Lys-605. The residue at position 650 (Tyr-650) is a Phosphotyrosine. Catalysis depends on Asp-702, which acts as the Proton acceptor. Ser-736 bears the Phosphoserine mark. Phosphothreonine occurs at positions 737 and 742. Phosphotyrosine is present on Tyr-750.

It belongs to the protein kinase superfamily. Ser/Thr protein kinase family. Binds to the ammonium transporter AMT1-1.

Its subcellular location is the membrane. It carries out the reaction L-seryl-[protein] + ATP = O-phospho-L-seryl-[protein] + ADP + H(+). It catalyses the reaction L-threonyl-[protein] + ATP = O-phospho-L-threonyl-[protein] + ADP + H(+). The polypeptide is Probable leucine-rich repeat receptor-like protein kinase At2g28990 (Arabidopsis thaliana (Mouse-ear cress)).